Here is a 367-residue protein sequence, read N- to C-terminus: tRNA (guanine(26)-N(2))-dimethyltransferase (367 aa).

Positions 1-365 constitute a Trm1 methyltransferase domain; the sequence is MRVSEGRVTV…ADVVEIREAT (365 aa). The S-adenosyl-L-methionine site is built by arginine 34, arginine 64, aspartate 79, aspartate 105, and alanine 106. The Zn(2+) site is built by cysteine 234, cysteine 237, cysteine 254, and cysteine 257.

Belongs to the class I-like SAM-binding methyltransferase superfamily. Trm1 family.

The catalysed reaction is guanosine(26) in tRNA + 2 S-adenosyl-L-methionine = N(2)-dimethylguanosine(26) in tRNA + 2 S-adenosyl-L-homocysteine + 2 H(+). Its function is as follows. Dimethylates a single guanine residue at position 26 of a number of tRNAs using S-adenosyl-L-methionine as donor of the methyl groups. This is tRNA (guanine(26)-N(2))-dimethyltransferase from Haloarcula marismortui (strain ATCC 43049 / DSM 3752 / JCM 8966 / VKM B-1809) (Halobacterium marismortui).